The following is a 93-amino-acid chain: Putative defensin-like protein 283 (93 aa).

A signal peptide spans 1–24; the sequence is MTKIGFYLATYATIYIILSPGLLA. Intrachain disulfides connect Cys43-Cys83, Cys66-Cys90, and Cys72-Cys92.

Belongs to the DEFL family.

The protein resides in the secreted. This chain is Putative defensin-like protein 283, found in Arabidopsis thaliana (Mouse-ear cress).